The primary structure comprises 438 residues: Aspartate--tRNA(Asp/Asn) ligase (438 aa).

Position 176 (Glu176) interacts with L-aspartate. The aspartate stretch occupies residues 198–201 (QLYK). Arg220 is an L-aspartate binding site. ATP-binding positions include 220–222 (RAE), 228–230 (RHL), and Glu361. Residues Glu361 and Ser364 each contribute to the Mg(2+) site. L-aspartate-binding residues include Ser364 and Arg368. 409-412 (GADR) serves as a coordination point for ATP.

This sequence belongs to the class-II aminoacyl-tRNA synthetase family. Type 2 subfamily. In terms of assembly, homodimer. The cofactor is Mg(2+).

Its subcellular location is the cytoplasm. The catalysed reaction is tRNA(Asx) + L-aspartate + ATP = L-aspartyl-tRNA(Asx) + AMP + diphosphate. Its function is as follows. Aspartyl-tRNA synthetase with relaxed tRNA specificity since it is able to aspartylate not only its cognate tRNA(Asp) but also tRNA(Asn). Reaction proceeds in two steps: L-aspartate is first activated by ATP to form Asp-AMP and then transferred to the acceptor end of tRNA(Asp/Asn). This is Aspartate--tRNA(Asp/Asn) ligase from Methanococcus maripaludis (strain DSM 14266 / JCM 13030 / NBRC 101832 / S2 / LL).